A 337-amino-acid polypeptide reads, in one-letter code: tRNA N6-adenosine threonylcarbamoyltransferase (337 aa).

Fe cation-binding residues include histidine 111 and histidine 115. Substrate-binding positions include 134-138 (LVSGG), aspartate 167, glycine 180, and asparagine 272. Aspartate 300 is a binding site for Fe cation.

This sequence belongs to the KAE1 / TsaD family. Requires Fe(2+) as cofactor.

Its subcellular location is the cytoplasm. It carries out the reaction L-threonylcarbamoyladenylate + adenosine(37) in tRNA = N(6)-L-threonylcarbamoyladenosine(37) in tRNA + AMP + H(+). In terms of biological role, required for the formation of a threonylcarbamoyl group on adenosine at position 37 (t(6)A37) in tRNAs that read codons beginning with adenine. Is involved in the transfer of the threonylcarbamoyl moiety of threonylcarbamoyl-AMP (TC-AMP) to the N6 group of A37, together with TsaE and TsaB. TsaD likely plays a direct catalytic role in this reaction. The protein is tRNA N6-adenosine threonylcarbamoyltransferase of Salmonella schwarzengrund (strain CVM19633).